Here is a 259-residue protein sequence, read N- to C-terminus: MSVLAVIPARYGSTRFPGKPLAMIAGQMMIERVWRIAAAVPGVDRVVVATDDQRIMDAVAAAGGEAVMTDPDCRNGTERALDAVKRLNSDADIVINVQGDAPLIPPWVIGGVAETLRADPSLQMATPAIALPPETEARMRADKANGSASGTTVVFNKAMDAMYFSKNVIPFRRKPDEGAPTYQHIGLYGYRRDTLEGLVALEPTPFELTESLEQLRALENGIPIRVVLTDYRGRSAWSVDAPEDAVRVEGIIAAEGELV.

This sequence belongs to the KdsB family.

It localises to the cytoplasm. The catalysed reaction is 3-deoxy-alpha-D-manno-oct-2-ulosonate + CTP = CMP-3-deoxy-beta-D-manno-octulosonate + diphosphate. Its pathway is nucleotide-sugar biosynthesis; CMP-3-deoxy-D-manno-octulosonate biosynthesis; CMP-3-deoxy-D-manno-octulosonate from 3-deoxy-D-manno-octulosonate and CTP: step 1/1. It functions in the pathway bacterial outer membrane biogenesis; lipopolysaccharide biosynthesis. Functionally, activates KDO (a required 8-carbon sugar) for incorporation into bacterial lipopolysaccharide in Gram-negative bacteria. The chain is 3-deoxy-manno-octulosonate cytidylyltransferase from Maricaulis maris (strain MCS10) (Caulobacter maris).